Consider the following 180-residue polypeptide: 3-hydroxyanthranilate 3,4-dioxygenase (180 aa).

Arg46 is a binding site for O2. 3 residues coordinate Fe cation: His50, Glu56, and His94. Glu56 is a binding site for substrate. Residues Arg98 and Glu109 each contribute to the substrate site. The Fe cation site is built by Cys124, Cys127, Cys161, and Cys164.

It belongs to the 3-HAO family. Homodimer. Fe(2+) serves as cofactor.

It catalyses the reaction 3-hydroxyanthranilate + O2 = (2Z,4Z)-2-amino-3-carboxymuconate 6-semialdehyde. Its pathway is cofactor biosynthesis; NAD(+) biosynthesis; quinolinate from L-kynurenine: step 3/3. Functionally, catalyzes the oxidative ring opening of 3-hydroxyanthranilate to 2-amino-3-carboxymuconate semialdehyde, which spontaneously cyclizes to quinolinate. This is 3-hydroxyanthranilate 3,4-dioxygenase from Ruegeria pomeroyi (strain ATCC 700808 / DSM 15171 / DSS-3) (Silicibacter pomeroyi).